A 150-amino-acid polypeptide reads, in one-letter code: 3-hydroxyacyl-[acyl-carrier-protein] dehydratase FabZ (150 aa).

Residue His54 is part of the active site.

Belongs to the thioester dehydratase family. FabZ subfamily.

Its subcellular location is the cytoplasm. The catalysed reaction is a (3R)-hydroxyacyl-[ACP] = a (2E)-enoyl-[ACP] + H2O. In terms of biological role, involved in unsaturated fatty acids biosynthesis. Catalyzes the dehydration of short chain beta-hydroxyacyl-ACPs and long chain saturated and unsaturated beta-hydroxyacyl-ACPs. The protein is 3-hydroxyacyl-[acyl-carrier-protein] dehydratase FabZ of Colwellia psychrerythraea (strain 34H / ATCC BAA-681) (Vibrio psychroerythus).